The chain runs to 404 residues: Exodeoxyribonuclease 7 large subunit (404 aa).

Belongs to the XseA family. As to quaternary structure, heterooligomer composed of large and small subunits.

It is found in the cytoplasm. The catalysed reaction is Exonucleolytic cleavage in either 5'- to 3'- or 3'- to 5'-direction to yield nucleoside 5'-phosphates.. In terms of biological role, bidirectionally degrades single-stranded DNA into large acid-insoluble oligonucleotides, which are then degraded further into small acid-soluble oligonucleotides. In Mesoplasma florum (strain ATCC 33453 / NBRC 100688 / NCTC 11704 / L1) (Acholeplasma florum), this protein is Exodeoxyribonuclease 7 large subunit.